A 1178-amino-acid chain; its full sequence is Integrin alpha-2 (1178 aa).

A signal peptide spans 1–26 (MGPGQAGGALLLRLLMLVQGILNCLA). At 27–1129 (YNVGLPGAKI…KPTEKAEVPT (1103 aa)) the chain is on the extracellular side. FG-GAP repeat units lie at residues 31–89 (LPGA…TATC) and 98–158 (ASIS…FLTS). Cysteine 80 and cysteine 89 are joined by a disulfide. N-linked (GlcNAc...) asparagine glycans are attached at residues asparagine 102 and asparagine 109. A VWFA domain is found at 185-362 (WEAVKNFLVK…TLGEQIFSIE (178 aa)). FG-GAP repeat units lie at residues 363–417 (GTVQ…VIFP), 420–472 (AFDQ…KQGN), 474–536 (TVIQ…ILNQ), 537–595 (HQFL…TIRT), and 601–661 (ILGS…FTPD). Residues asparagine 429, asparagine 457, and asparagine 472 are each glycosylated (N-linked (GlcNAc...) asparagine). A Cell attachment site motif is present at residues 480–482 (RGD). Residues aspartate 496, aspartate 498, aspartate 500, aspartate 504, aspartate 560, asparagine 562, aspartate 564, aspartate 568, aspartate 624, asparagine 626, aspartate 628, and aspartate 632 each coordinate Ca(2+). 5 cysteine pairs are disulfide-bonded: cysteine 677–cysteine 734, cysteine 786–cysteine 792, cysteine 862–cysteine 873, cysteine 1016–cysteine 1047, and cysteine 1052–cysteine 1057. Asparagine 696 carries N-linked (GlcNAc...) asparagine glycosylation. 3 N-linked (GlcNAc...) asparagine glycosylation sites follow: asparagine 1054, asparagine 1071, and asparagine 1078. A helical membrane pass occupies residues 1130–1151 (GVIIGSIIAGILLLLAMTAGLW). The Cytoplasmic portion of the chain corresponds to 1152–1178 (KLGFFKRQYKKMGQNPDEMDETTELNS). Residues 1154 to 1158 (GFFKR) carry the GFFKR motif motif.

It belongs to the integrin alpha chain family. As to quaternary structure, heterodimer of an alpha and a beta subunit. Alpha-2 associates with beta-1. Interacts with HPS5 and RAB21.

It is found in the membrane. Its function is as follows. Integrin alpha-2/beta-1 is a collagen receptor, being responsible for adhesion of platelets and other cells to collagens, modulation of collagen and collagenase gene expression, force generation and organization of newly synthesized extracellular matrix. It is also a receptor for laminins, collagen C-propeptides and E-cadherin. Mice homozygous for a null mutation in the alpha-2 die very early in embryogenesis. This is Integrin alpha-2 (Itga2) from Mus musculus (Mouse).